Here is a 148-residue protein sequence, read N- to C-terminus: Aspartate carbamoyltransferase regulatory chain (148 aa).

Residues Cys-106, Cys-111, Cys-134, and Cys-137 each coordinate Zn(2+).

This sequence belongs to the PyrI family. In terms of assembly, contains catalytic and regulatory chains. It depends on Zn(2+) as a cofactor.

Involved in allosteric regulation of aspartate carbamoyltransferase. This chain is Aspartate carbamoyltransferase regulatory chain, found in Methanococcus maripaludis (strain DSM 14266 / JCM 13030 / NBRC 101832 / S2 / LL).